Consider the following 318-residue polypeptide: Oxidoreductase swnN (318 aa).

This sequence belongs to the NmrA-type oxidoreductase family. Isoflavone reductase subfamily.

Its pathway is mycotoxin biosynthesis. Functionally, aminotransferase; part of the gene cluster that mediates the biosynthesis of swainsonine (SW), a cytotoxic fungal alkaloid and a potential cancer therapy drug. Swainsonine production occurs via a multibranched pathway and is dispensable for fungal colonization of plants and infection of insect hosts. The first step of swainsonine biosynthesis is the production of the precursor pipecolic acid (PA) via conversion of L-lysine (Lys) to 1-piperideine-6-carboxylate (P6C) by the aminotransferase swnA, the latter being further reduced to PA by the reductase swnR. The PKS-NRPS hybrid synthetase swnK uptakes and condensates PA and malonyl-CoA with and without skipping of the ketoreductase (KR) domain in order to produce 3 intermediates, 1-oxoindolizidine, (1S)-1-hydroxyindolizin, and (1R)-1-hydroxyindolizine; with the transisomer (1S)-1-hydroxyindolizin being predominant. The terminal thioester reductase (TE) domain of swnK is involved in reduction of the thioester bond to release the intermediate aldehydes. The oxidoreductase swnN could contribute to the reduction of 1-oxoindolizidine to (1S)-1-hydroxyindolizin and (1R)-1-hydroxyindolizine, contributing to the major route of SW production. The dioxygenase swnH2 would be responsible for the oxidization of (1R)-1-hydroxyindolizine into (1R,2S)-1,2-dihydroxyindolizine and of (1S)-1-hydroxyindolizin to yield both (1R,2S)-1,2-dihydroxyindolizine and (1S,2S)-1,2-dihydroxyindolizine. The dioxygenase swnH1 then performs the conversion of the 1,2-dihydroxyindolizine epimers to SW. This chain is Oxidoreductase swnN, found in Arthroderma benhamiae (strain ATCC MYA-4681 / CBS 112371) (Trichophyton mentagrophytes).